Consider the following 597-residue polypeptide: MTPGRRSALLSRSVCGAIVLAVLVTVSGCASLPDSSTPQAIGTINRDSPGSSVAAPAPGREPDLLLRDFFKASTDPSNRHLAARQFLTPGVSGRWDDAASATIVDKVDVLPETRSADQATYTIRANKVGQLEPGGLYVAEEGSFETKISLELQGGEWRISELPAGVILDRAQFLNTYQRKSLYFLDPAGTTVVPDPRWVSGAQDQMASQLIGLLIDGPKAALAPAVRNELGDGVSVRGPITKADGRTAQVGVGLGGIRIDFAGVPPMDAQAKQLFAAQVIWTLANAEISGPYVLLADGEPFDERFPNGWTTADVASMNPFATSSATVGLHALREGSMVSVTETGVTPVPGYFGSARNMRSLALSQDGKLVAAVADTGRPAPEPASSLMVGAYEDGAASVLEGGAITRPTWAPDNSAIWAAVNGNTVIRVLREPGTGRTSVVNVDAGAVTALGATITELRLSRDGVRAALIVDGKVYLAIVTQMPGGEYALTNPRAVAIGLGSPALSLDWSTSDTIVVARAASDIPVVQVAVDGSRMDALPSRNLTAPVVAVDASTTTEFVADSRAVFQLNNNDPAGDRYWREVPGLTGVKAIPVLPG.

An N-terminal signal peptide occupies residues 1–28; sequence MTPGRRSALLSRSVCGAIVLAVLVTVSG. C29 is lipidated: N-palmitoyl cysteine. C29 carries the S-diacylglycerol cysteine lipid modification. Residues 38–51 show a composition bias toward polar residues; the sequence is PQAIGTINRDSPGS. Positions 38-58 are disordered; the sequence is PQAIGTINRDSPGSSVAAPAP.

This sequence belongs to the LpqB lipoprotein family.

The protein resides in the cell membrane. The protein is Lipoprotein LpqB of Rhodococcus jostii (strain RHA1).